A 650-amino-acid polypeptide reads, in one-letter code: DNA gyrase subunit B (650 aa).

Residues Asn-429–Pro-543 form the Toprim domain. Mg(2+)-binding residues include Glu-435, Asp-508, and Asp-510.

Belongs to the type II topoisomerase GyrB family. As to quaternary structure, heterotetramer, composed of two GyrA and two GyrB chains. In the heterotetramer, GyrA contains the active site tyrosine that forms a transient covalent intermediate with DNA, while GyrB binds cofactors and catalyzes ATP hydrolysis. The cofactor is Mg(2+). It depends on Mn(2+) as a cofactor. Ca(2+) is required as a cofactor.

Its subcellular location is the cytoplasm. It carries out the reaction ATP-dependent breakage, passage and rejoining of double-stranded DNA.. A type II topoisomerase that negatively supercoils closed circular double-stranded (ds) DNA in an ATP-dependent manner to modulate DNA topology and maintain chromosomes in an underwound state. Negative supercoiling favors strand separation, and DNA replication, transcription, recombination and repair, all of which involve strand separation. Also able to catalyze the interconversion of other topological isomers of dsDNA rings, including catenanes and knotted rings. Type II topoisomerases break and join 2 DNA strands simultaneously in an ATP-dependent manner. The sequence is that of DNA gyrase subunit B from Streptococcus pyogenes serotype M18 (strain MGAS8232).